Consider the following 91-residue polypeptide: UPF0512 protein M (91 aa).

This sequence belongs to the UPF0512 family.

This is UPF0512 protein M from Dictyostelium discoideum (Social amoeba).